A 453-amino-acid polypeptide reads, in one-letter code: tRNA modification GTPase MnmE (453 aa).

(6S)-5-formyl-5,6,7,8-tetrahydrofolate is bound by residues R22, E79, and K119. The 162-residue stretch at G215–G376 folds into the TrmE-type G domain. N225 provides a ligand contact to K(+). GTP contacts are provided by residues N225–S230, T244–T250, D269–G272, and N334–D337. S229 lines the Mg(2+) pocket. K(+) is bound by residues T244, I246, and T249. T250 is a binding site for Mg(2+). (6S)-5-formyl-5,6,7,8-tetrahydrofolate is bound at residue K453.

Belongs to the TRAFAC class TrmE-Era-EngA-EngB-Septin-like GTPase superfamily. TrmE GTPase family. In terms of assembly, homodimer. Heterotetramer of two MnmE and two MnmG subunits. The cofactor is K(+).

The protein resides in the cytoplasm. Functionally, exhibits a very high intrinsic GTPase hydrolysis rate. Involved in the addition of a carboxymethylaminomethyl (cmnm) group at the wobble position (U34) of certain tRNAs, forming tRNA-cmnm(5)s(2)U34. In Aeromonas hydrophila subsp. hydrophila (strain ATCC 7966 / DSM 30187 / BCRC 13018 / CCUG 14551 / JCM 1027 / KCTC 2358 / NCIMB 9240 / NCTC 8049), this protein is tRNA modification GTPase MnmE.